The primary structure comprises 362 residues: Phospho-N-acetylmuramoyl-pentapeptide-transferase (362 aa).

10 helical membrane-spanning segments follow: residues 27-47 (VMAAMTALLISFACGPAVIRW), 73-93 (TMGGALIIIAIAVTTLLWGDL), 97-117 (YVWVTLLVTLGFGAVGWVDDW), 132-152 (WKYLWTSLIALAAALFLGLTA), 160-180 (LIVPFFKAVSYPLGMLGFVAL), 200-220 (GLAIMPTVMVAGALAIFAYVA), 237-257 (AGELAVFCGALAGAGLGFLWF), 264-284 (VFMGDVGALALGAALGTVAVV), 289-309 (IVLFIMGGLFVAETLSVMVQV), and 339-359 (QVVVRFWIITIMLVLFGLSTL).

The protein belongs to the glycosyltransferase 4 family. MraY subfamily. Mg(2+) serves as cofactor.

Its subcellular location is the cell inner membrane. It catalyses the reaction UDP-N-acetyl-alpha-D-muramoyl-L-alanyl-gamma-D-glutamyl-meso-2,6-diaminopimeloyl-D-alanyl-D-alanine + di-trans,octa-cis-undecaprenyl phosphate = di-trans,octa-cis-undecaprenyl diphospho-N-acetyl-alpha-D-muramoyl-L-alanyl-D-glutamyl-meso-2,6-diaminopimeloyl-D-alanyl-D-alanine + UMP. The protein operates within cell wall biogenesis; peptidoglycan biosynthesis. In terms of biological role, catalyzes the initial step of the lipid cycle reactions in the biosynthesis of the cell wall peptidoglycan: transfers peptidoglycan precursor phospho-MurNAc-pentapeptide from UDP-MurNAc-pentapeptide onto the lipid carrier undecaprenyl phosphate, yielding undecaprenyl-pyrophosphoryl-MurNAc-pentapeptide, known as lipid I. This Aromatoleum aromaticum (strain DSM 19018 / LMG 30748 / EbN1) (Azoarcus sp. (strain EbN1)) protein is Phospho-N-acetylmuramoyl-pentapeptide-transferase.